Consider the following 305-residue polypeptide: Mas-related G-protein coupled receptor member A8 (305 aa).

Residues 1-17 lie on the Extracellular side of the membrane; the sequence is MDKTILGSIDIETLIRH. The chain crosses the membrane as a helical span at residues 18–38; sequence LMIIIFGLVGLTGNAIVFWLL. Residues 39 to 46 are Cytoplasmic-facing; that stretch reads GFHLHRNA. Residues 47 to 67 traverse the membrane as a helical segment; that stretch reads FLVYILNLALADFFYLLCHII. The Extracellular portion of the chain corresponds to 68 to 85; sequence NSIMFLLKVPSPNIILDH. A helical membrane pass occupies residues 86–106; it reads CFYTIMIVLYITGLSMLSAIS. The Cytoplasmic portion of the chain corresponds to 107–129; sequence TERCLSVLCPIWYRCHRPEHTST. Residues 130–150 form a helical membrane-spanning segment; sequence AMCAVIWVMSLLISILNGYFC. N-linked (GlcNAc...) asparagine glycosylation is found at asparagine 151 and asparagine 159. Over 151–172 the chain is Extracellular; that stretch reads NFSSPKYVNNSVCQASDIFIRT. A helical transmembrane segment spans residues 173–193; the sequence is YPIFLFVLLCLSTLALLARLF. The Cytoplasmic portion of the chain corresponds to 194–207; that stretch reads SGAGKRKFTRLFVT. Residues 208–228 form a helical membrane-spanning segment; the sequence is IMLAILVFLLCGLPLGFFWFL. The Extracellular segment spans residues 229–243; that stretch reads SPWIEDRFIVLDYRL. A helical transmembrane segment spans residues 244–264; it reads FFASVVLTVVNSCANPIIYFF. Topologically, residues 265 to 305 are cytoplasmic; the sequence is VGSFRHRLKQQTLKMFLQRALQDTPETPENMVEMSRSKAEP.

The protein belongs to the G-protein coupled receptor 1 family. Mas subfamily. Expressed in a subset of sensory neurons that includes nociceptors. Expressed in the subclass of non-peptidergic sensory neurons that are IB4(+) and VR1(-).

The protein localises to the cell membrane. In terms of biological role, orphan receptor. May be a receptor for RFamide-family neuropeptides such as NPFF and NPAF, which are analgesic in vivo. May regulate nociceptor function and/or development, including the sensation or modulation of pain. In Mus musculus (Mouse), this protein is Mas-related G-protein coupled receptor member A8 (Mrgpra8).